The following is a 216-amino-acid chain: Somatotropin (216 aa).

The signal sequence occupies residues 1–26 (MAASPRNSVLLAFALLCLPWPQEVGA). Position 45 (His-45) interacts with Zn(2+). Cys-78 and Cys-189 form a disulfide bridge. Ser-131 carries the post-translational modification Phosphoserine. Glu-198 is a Zn(2+) binding site. A disulfide bridge connects residues Cys-206 and Cys-214.

It belongs to the somatotropin/prolactin family.

It localises to the secreted. Its function is as follows. Plays an important role in growth control. Its major role in stimulating body growth is to stimulate the liver and other tissues to secrete IGF1. It stimulates both the differentiation and proliferation of myoblasts. It also stimulates amino acid uptake and protein synthesis in muscle and other tissues. This chain is Somatotropin (GH1), found in Canis lupus familiaris (Dog).